Consider the following 23-residue polypeptide: Magainin-BM2 (23 aa).

As to expression, expressed by the skin glands.

It localises to the secreted. Antimicrobial peptide. In Xenopus boumbaensis (Mawa clawed frog), this protein is Magainin-BM2.